Consider the following 464-residue polypeptide: MSTAALVEGKIVQCIGAVIDVEFPRESMPKIYDALILDGSELTLEVQQQLGDGVVRTICLGASDGLRRGLTVKNTAKPISVPVGKPTLGRIMDVLGRPIDEAGPIESEVTRSIHQKAPAFDELSPSTELLETGIKVIDLICPFAKGGKVGLFGGAGVGKTVNMMELINNIAKEHGGYSVFAGVGERTREGNDFYHEMKDSNVLDKVALVYGQMNEPPGNRLRVALTGLTMAEHFRDEGLDVLFFVDNIYRFTLAGTEVSALLGRMPSAVGYQPTLAEEMGKLQERITSTKKGSITSVQAVYVPADDLTDPSPATTFGHLDATVVLSRDIASLGIYPAVDPLDSTSRQIDPNVIGEEHYSITRRVQQTLQRYKELRDIIAILGMDELSPEDKLSVARARKIQRFLSQPFHVAEVFTGSPGKYVPLKETIRGFKMIVDGECDHLPEQAFYMVGTIDEAFEKAKKIS.

153-160 contributes to the ATP binding site; it reads GGAGVGKT.

The protein belongs to the ATPase alpha/beta chains family. F-type ATPases have 2 components, CF(1) - the catalytic core - and CF(0) - the membrane proton channel. CF(1) has five subunits: alpha(3), beta(3), gamma(1), delta(1), epsilon(1). CF(0) has three main subunits: a(1), b(2) and c(9-12). The alpha and beta chains form an alternating ring which encloses part of the gamma chain. CF(1) is attached to CF(0) by a central stalk formed by the gamma and epsilon chains, while a peripheral stalk is formed by the delta and b chains.

It is found in the cell inner membrane. The enzyme catalyses ATP + H2O + 4 H(+)(in) = ADP + phosphate + 5 H(+)(out). Produces ATP from ADP in the presence of a proton gradient across the membrane. The catalytic sites are hosted primarily by the beta subunits. This Burkholderia ambifaria (strain ATCC BAA-244 / DSM 16087 / CCUG 44356 / LMG 19182 / AMMD) (Burkholderia cepacia (strain AMMD)) protein is ATP synthase subunit beta.